A 155-amino-acid polypeptide reads, in one-letter code: Small ribosomal subunit protein uS7c (155 aa).

The protein belongs to the universal ribosomal protein uS7 family. As to quaternary structure, part of the 30S ribosomal subunit.

It is found in the plastid. It localises to the chloroplast. Its function is as follows. One of the primary rRNA binding proteins, it binds directly to 16S rRNA where it nucleates assembly of the head domain of the 30S subunit. In Spathiphyllum wallisii (Peace lily), this protein is Small ribosomal subunit protein uS7c (rps7).